The primary structure comprises 140 residues: Large ribosomal subunit protein uL11 (140 aa).

The protein belongs to the universal ribosomal protein uL11 family. Part of the ribosomal stalk of the 50S ribosomal subunit. Interacts with L10 and the large rRNA to form the base of the stalk. L10 forms an elongated spine to which L12 dimers bind in a sequential fashion forming a multimeric L10(L12)X complex. In terms of processing, one or more lysine residues are methylated.

In terms of biological role, forms part of the ribosomal stalk which helps the ribosome interact with GTP-bound translation factors. In Desulforapulum autotrophicum (strain ATCC 43914 / DSM 3382 / VKM B-1955 / HRM2) (Desulfobacterium autotrophicum), this protein is Large ribosomal subunit protein uL11.